The primary structure comprises 334 residues: Phosphoribosylformylglycinamidine cyclo-ligase (334 aa).

The protein belongs to the AIR synthase family.

Its subcellular location is the cytoplasm. It carries out the reaction 2-formamido-N(1)-(5-O-phospho-beta-D-ribosyl)acetamidine + ATP = 5-amino-1-(5-phospho-beta-D-ribosyl)imidazole + ADP + phosphate + H(+). It participates in purine metabolism; IMP biosynthesis via de novo pathway; 5-amino-1-(5-phospho-D-ribosyl)imidazole from N(2)-formyl-N(1)-(5-phospho-D-ribosyl)glycinamide: step 2/2. The protein is Phosphoribosylformylglycinamidine cyclo-ligase of Pyrococcus horikoshii (strain ATCC 700860 / DSM 12428 / JCM 9974 / NBRC 100139 / OT-3).